The sequence spans 135 residues: Large ribosomal subunit protein eL32 (135 aa).

Belongs to the eukaryotic ribosomal protein eL32 family.

This is Large ribosomal subunit protein eL32 from Methanococcus maripaludis (strain C6 / ATCC BAA-1332).